A 1143-amino-acid chain; its full sequence is DNA-directed RNA polymerase subunit beta (1143 aa).

It belongs to the RNA polymerase beta chain family. In terms of assembly, in plastids the minimal PEP RNA polymerase catalytic core is composed of four subunits: alpha, beta, beta', and beta''. When a (nuclear-encoded) sigma factor is associated with the core the holoenzyme is formed, which can initiate transcription.

Its subcellular location is the plastid. The protein localises to the chloroplast. It carries out the reaction RNA(n) + a ribonucleoside 5'-triphosphate = RNA(n+1) + diphosphate. Functionally, DNA-dependent RNA polymerase catalyzes the transcription of DNA into RNA using the four ribonucleoside triphosphates as substrates. The sequence is that of DNA-directed RNA polymerase subunit beta from Porphyra purpurea (Red seaweed).